The sequence spans 213 residues: Orotate phosphoribosyltransferase (213 aa).

Lys26 lines the 5-phospho-alpha-D-ribose 1-diphosphate pocket. Orotate is bound at residue 34–35 (FF). 5-phospho-alpha-D-ribose 1-diphosphate contacts are provided by residues 72–73 (YK), Arg99, Lys100, Lys103, His105, and 124–132 (DDVITAGTA). The orotate site is built by Thr128 and Arg156.

This sequence belongs to the purine/pyrimidine phosphoribosyltransferase family. PyrE subfamily. As to quaternary structure, homodimer. Requires Mg(2+) as cofactor.

The enzyme catalyses orotidine 5'-phosphate + diphosphate = orotate + 5-phospho-alpha-D-ribose 1-diphosphate. It functions in the pathway pyrimidine metabolism; UMP biosynthesis via de novo pathway; UMP from orotate: step 1/2. Its function is as follows. Catalyzes the transfer of a ribosyl phosphate group from 5-phosphoribose 1-diphosphate to orotate, leading to the formation of orotidine monophosphate (OMP). This Salmonella paratyphi A (strain ATCC 9150 / SARB42) protein is Orotate phosphoribosyltransferase.